Here is a 616-residue protein sequence, read N- to C-terminus: Dihydroxy-acid dehydratase (616 aa).

Asp-81 lines the Mg(2+) pocket. Cys-122 contacts [2Fe-2S] cluster. Mg(2+) is bound by residues Asp-123 and Lys-124. Position 124 is an N6-carboxylysine (Lys-124). Cys-195 serves as a coordination point for [2Fe-2S] cluster. Glu-491 serves as a coordination point for Mg(2+). Ser-517 serves as the catalytic Proton acceptor.

It belongs to the IlvD/Edd family. In terms of assembly, homodimer. [2Fe-2S] cluster serves as cofactor. Mg(2+) is required as a cofactor.

It carries out the reaction (2R)-2,3-dihydroxy-3-methylbutanoate = 3-methyl-2-oxobutanoate + H2O. The catalysed reaction is (2R,3R)-2,3-dihydroxy-3-methylpentanoate = (S)-3-methyl-2-oxopentanoate + H2O. It functions in the pathway amino-acid biosynthesis; L-isoleucine biosynthesis; L-isoleucine from 2-oxobutanoate: step 3/4. It participates in amino-acid biosynthesis; L-valine biosynthesis; L-valine from pyruvate: step 3/4. Functionally, functions in the biosynthesis of branched-chain amino acids. Catalyzes the dehydration of (2R,3R)-2,3-dihydroxy-3-methylpentanoate (2,3-dihydroxy-3-methylvalerate) into 2-oxo-3-methylpentanoate (2-oxo-3-methylvalerate) and of (2R)-2,3-dihydroxy-3-methylbutanoate (2,3-dihydroxyisovalerate) into 2-oxo-3-methylbutanoate (2-oxoisovalerate), the penultimate precursor to L-isoleucine and L-valine, respectively. This is Dihydroxy-acid dehydratase from Salmonella heidelberg (strain SL476).